We begin with the raw amino-acid sequence, 313 residues long: MNWENESSPKEFILLGFSDRAWLQMPLFVVLLISYTITIFGNVSIMMVCILDPKLHTPMYFFLTNLSILDLCYTTTTVPHMLVNIGCNKKTISYAGCVAHLIIFLALGATECLLLAVMSFDRYVAVCRPLHYVVIMNYWFCLRMAAFSWLIGFGNSVLQSSLTLNMPRCGHQEVDHFFCEVPALLKLSCADTKPIEAELFFFSVLILLIPVTLILISYGFIAQAVLKIRSAEGRQKAFGTCGSHMIVVSLFYGTAIYMYLQPPSSTSKDWGKMVSLFYGIITSMLNSLIYSLRNKDMKEAFKRLMPRIFFCKK.

The Extracellular portion of the chain corresponds to Met-1 to Met-25. N-linked (GlcNAc...) asparagine glycosylation is present at Asn-5. The helical transmembrane segment at Pro-26 to Cys-49 threads the bilayer. Topologically, residues Ile-50 to Thr-57 are cytoplasmic. A helical transmembrane segment spans residues Pro-58–Pro-79. Over His-80 to His-100 the chain is Extracellular. Cys-97 and Cys-189 are disulfide-bonded. A helical transmembrane segment spans residues Leu-101–Phe-120. Topologically, residues Asp-121–Trp-139 are cytoplasmic. Residues Phe-140–Leu-158 form a helical membrane-spanning segment. Residues Gln-159–Ile-195 are Extracellular-facing. A helical transmembrane segment spans residues Glu-196 to Gly-219. The Cytoplasmic portion of the chain corresponds to Phe-220–Lys-236. A helical membrane pass occupies residues Ala-237–Tyr-259. At Leu-260–Lys-272 the chain is on the extracellular side. The chain crosses the membrane as a helical span at residues Met-273–Leu-292. Residues Arg-293–Lys-313 lie on the Cytoplasmic side of the membrane.

Belongs to the G-protein coupled receptor 1 family.

It localises to the cell membrane. Its function is as follows. Odorant receptor. The polypeptide is Putative olfactory receptor 2B3 (OR2B3) (Homo sapiens (Human)).